A 268-amino-acid chain; its full sequence is Interleukin-1 alpha (268 aa).

Residues 1 to 112 (MAKVPDLFED…DTEEEIIKPR (112 aa)) constitute a propeptide that is removed on maturation. Lys82 carries the post-translational modification N6-acetyllysine. Residues 82-86 (KKRRL) form a nuclear localization signal (NLS) region. A Phosphoserine modification is found at Ser87. N-linked (GlcNAc...) asparagine glycans are attached at residues Asn102 and Asn141.

This sequence belongs to the IL-1 family. Monomer. Interacts with TMED10; the interaction mediates the translocation from the cytoplasm into the ERGIC (endoplasmic reticulum-Golgi intermediate compartment) and thereby secretion. Interacts with IL1R1. Interacts with S100A13; this interaction is the first step in the export of IL1A, followed by direct translocation of this complex across the plasma membrane. Post-translationally, acetylated within its nuclear localization sequence, which impacts subcellular localization. Proteolytic processed by CAPN1 in a calcium-dependent manner. Cleavage from 31 kDa precursor to 18 kDa biologically active molecules. In terms of processing, phosphorylated. Phosphorylation greatly enhances susceptibility to digestion and promotes the conversion of pre-IL1A alpha to the biologically active IL1A.

It is found in the nucleus. Its subcellular location is the cytoplasm. The protein resides in the secreted. Functionally, cytokine constitutively present intracellularly in nearly all resting non-hematopoietic cells that plays an important role in inflammation and bridges the innate and adaptive immune systems. After binding to its receptor IL1R1 together with its accessory protein IL1RAP, forms the high affinity interleukin-1 receptor complex. Signaling involves the recruitment of adapter molecules such as MYD88, IRAK1 or IRAK4. In turn, mediates the activation of NF-kappa-B and the three MAPK pathways p38, p42/p44 and JNK pathways. Within the cell, acts as an alarmin and cell death results in its liberation in the extracellular space after disruption of the cell membrane to induce inflammation and alert the host to injury or damage. In addition to its role as a danger signal, which occurs when the cytokine is passively released by cell necrosis, directly senses DNA damage and acts as signal for genotoxic stress without loss of cell integrity. In Capra hircus (Goat), this protein is Interleukin-1 alpha (IL1A).